The following is a 90-amino-acid chain: Acyl-CoA-binding protein homolog (90 aa).

One can recognise an ACB domain in the interval 3–89 (LQEQFDQAAS…VESLIASLGL (87 aa)). An acyl-CoA is bound by residues R15, 30 to 34 (YALFK), K53, K57, and Y76.

It belongs to the ACBP family.

In terms of biological role, binds medium- and long-chain acyl-CoA esters with very high affinity and may function as an intracellular carrier of acyl-CoA esters. This chain is Acyl-CoA-binding protein homolog, found in Manduca sexta (Tobacco hawkmoth).